Reading from the N-terminus, the 448-residue chain is Death-associated protein kinase 3 (448 aa).

The 263-residue stretch at 13-275 (YEMGEELGSG…IAQSLEHSWI (263 aa)) folds into the Protein kinase domain. ATP-binding positions include 19-27 (LGSGQFAIV) and lysine 42. The active-site Proton acceptor is aspartate 139. The segment at 161-204 (DFGIAHRIEAGSEFKNIFGTPEFVAPEIVNYEPLGLEADMWSIG) is activation segment. Residues threonine 180 and threonine 225 each carry the phosphothreonine modification. Residue threonine 265 is modified to Phosphothreonine; by autocatalysis. Threonine 265 bears the Phosphothreonine; by ROCK1 mark. Serine 304 carries the phosphoserine; by DAPK1 modification. Residue serine 306 is modified to Phosphoserine; by autocatalysis and DAPK1. Phosphoserine; by DAPK1 occurs at positions 307, 313, and 321. The interaction with CDC5L stretch occupies residues 390–448 (AQEEARAALLGAGGLKRRLCRLENRYDALAAQVAAEVQFVRDLVRALEQERLQAECGVR). The required for interaction with ATF4 but not with PAWR stretch occupies residues 418–448 (LAAQVAAEVQFVRDLVRALEQERLQAECGVR). The tract at residues 422–436 (VAAEVQFVRDLVRAL) is leucine-zipper.

The protein belongs to the protein kinase superfamily. CAMK Ser/Thr protein kinase family. DAP kinase subfamily. Homooligomer in its kinase-active form (homotrimers and homodimers are reported); monomeric in its kinase-inactive form. Homodimerization is required for activation segment autophosphorylation. Interacts with DAXX, ATF4, NLK, TCF7L2, UBE2D1, UBE2D2, UBE2D3 and CDC5L. Interacts with PAWR; also demonstrated in aorta smooth muscle cells indicative for the cytoskeletal targeting function of PAWR. Interacts with AR; enhanced by AATF. Interacts with LUZP1; the interaction is likely to occur throughout the cell cycle and reduces the LUZP1-mediated suppression of MYL9 phosphorylation. Mg(2+) is required as a cofactor. Post-translationally, ubiquitinated. Ubiquitination mediated by the UBE2D3 E3 ligase does not lead to proteasomal degradation, but influences promyelocytic leukemia protein nuclear bodies (PML-NBs) formation in the nucleus. In terms of processing, the phosphorylation status is critical for kinase activity, oligomerization and intracellular localization. Phosphorylation at Thr-180, Thr-225 and Thr-265 is essential for activity. The phosphorylated form is localized in the cytoplasm and nuclear translocation or retention is maximal when it is not phosphorylated. Phosphorylation increases the trimeric form, and its dephosphorylation favors a kinase-inactive monomeric form. Ubiquitously expressed in all tissue types examined. High levels in brain, heart, lung and spleen, lower expression in kidney, liver, skeletal muscle and testis. Isoform 2 is expressed in the smooth muscle.

It is found in the nucleus. The protein resides in the PML body. The protein localises to the cytoplasm. Its subcellular location is the cytoskeleton. It localises to the microtubule organizing center. It is found in the chromosome. The protein resides in the centromere. The protein localises to the spindle. Its subcellular location is the midbody. The catalysed reaction is L-seryl-[protein] + ATP = O-phospho-L-seryl-[protein] + ADP + H(+). It carries out the reaction L-threonyl-[protein] + ATP = O-phospho-L-threonyl-[protein] + ADP + H(+). A sequential activation is proposed: autophosphorylation at consensus sites is leading to dimerization of the catalytic domain and activation segment exchange (producing an active confirmation of both kinase modules in trans) followed by phosphorylation at Thr-180 in the activation segment and at other regulatory sites. Phosphorylation at Thr-180, Thr-225 and Thr-265 is essential for activity. Inhibited by pyridone 6 (K00225), a potent, ATP-competitive inhibitor. Phosphorylation at Thr-180, Thr-225 and Thr-265 is essential for activity. Functionally, serine/threonine kinase which is involved in the regulation of apoptosis, autophagy, transcription, translation and actin cytoskeleton reorganization. Regulates both type I (caspase-dependent) apoptotic and type II (caspase-independent) autophagic cell deaths signal, depending on the cellular setting. Involved in formation of promyelocytic leukemia protein nuclear body (PML-NB). Involved in apoptosis involving PAWR which mediates cytoplasmic relocation; in vitro phosphorylates PAWR. Regulates myosin phosphorylation in both smooth muscle and non-muscle cells. In smooth muscle, regulates myosin either directly by phosphorylating MYL12B and MYL9 or through inhibition of smooth muscle myosin phosphatase (SMPP1M) via phosphorylation of PPP1R12A; the inhibition of SMPP1M functions to enhance muscle responsiveness to Ca(2+) and promote a contractile state. Phosphorylates MYL12B in non-muscle cells leading to reorganization of actin cytoskeleton such as in regulation of cell polarity and cell migration. Positively regulates canonical Wnt/beta-catenin signaling through interaction with NLK and TCF7L2; disrupts the NLK-TCF7L2 complex thereby influencing the phosphorylation of TCF7L2 by NLK. Phosphorylates RPL13A on 'Ser-77' upon interferon-gamma activation which is causing RPL13A release from the ribosome, RPL13A association with the GAIT complex and its subsequent involvement in transcript-selective translation inhibition. Phosphorylates STAT3 and enhances its transcriptional activity. Enhances transcription from AR-responsive promoters in a hormone- and kinase-dependent manner. Phosphorylates histone H3 on 'Thr-11' at centromeres during mitosis. The sequence is that of Death-associated protein kinase 3 (Dapk3) from Rattus norvegicus (Rat).